The sequence spans 173 residues: Small ribosomal subunit protein uS5 (173 aa).

The S5 DRBM domain occupies 18–81; sequence LREKMIAVNR…EQARRGMFKV (64 aa).

It belongs to the universal ribosomal protein uS5 family. Part of the 30S ribosomal subunit. Contacts proteins S4 and S8.

With S4 and S12 plays an important role in translational accuracy. Functionally, located at the back of the 30S subunit body where it stabilizes the conformation of the head with respect to the body. This chain is Small ribosomal subunit protein uS5, found in Bordetella petrii (strain ATCC BAA-461 / DSM 12804 / CCUG 43448).